A 186-amino-acid polypeptide reads, in one-letter code: HGPRTase-like protein 3 (186 aa).

The protein belongs to the purine/pyrimidine phosphoribosyltransferase family. Archaeal HPRT subfamily.

In terms of biological role, may catalyze a purine salvage reaction, the substrate is unknown. The protein is HGPRTase-like protein 3 of Haloterrigena turkmenica (strain ATCC 51198 / DSM 5511 / JCM 9101 / NCIMB 13204 / VKM B-1734 / 4k) (Halococcus turkmenicus).